A 139-amino-acid chain; its full sequence is Inactive palmitoleoyl-protein carboxylesterase notum1b (139 aa).

Belongs to the pectinacetylesterase family. Notum subfamily.

In terms of biological role, probable inactive palmitoleoyl-protein carboxylesterase. This is Inactive palmitoleoyl-protein carboxylesterase notum1b from Danio rerio (Zebrafish).